A 162-amino-acid polypeptide reads, in one-letter code: MERILENAMYASRWLLAPIYFGLSLGLLALALKFFQEVVHVLPNVFALSEADLILVILSLIDMSLVGGLLVMVMISGYENFVSQLDIDESKEKLNWLGKMDSSSLKMKVAASIVAISSIHLLRVFMDAQNISTDYLMWYVIIHMTFVVSAFCMGYLDKLTKH.

Helical transmembrane passes span Leu15 to Phe35, Leu53 to Val73, Val109 to Met126, and Leu136 to Leu156.

It belongs to the UPF0114 family.

Its subcellular location is the cell membrane. This is UPF0114 protein Pput_0713 from Pseudomonas putida (strain ATCC 700007 / DSM 6899 / JCM 31910 / BCRC 17059 / LMG 24140 / F1).